The following is a 228-amino-acid chain: MSTHAPVITVDGPSGAGKGTLCMLLAEKLGWHLLDSGAIYRVLALAAIHHGVDLESEDVLVPLAAHLDVQFKAEGDLVKVILEGEDVSGELRKEETGMTASKVAALPRVREALLRRQRAFSNAPGLVADGRDMGTVVFPNAIVKIFLDASAEERANRRMNQLQQKGLDVNFGSLLSEIQERDDRDRNRSVAPLRPAEDALVLDSTDMSIEQVTAQAFAYIEQALEQKS.

G12–T20 contributes to the ATP binding site.

Belongs to the cytidylate kinase family. Type 1 subfamily.

The protein localises to the cytoplasm. It catalyses the reaction CMP + ATP = CDP + ADP. It carries out the reaction dCMP + ATP = dCDP + ADP. This Photobacterium profundum (strain SS9) protein is Cytidylate kinase.